Here is a 922-residue protein sequence, read N- to C-terminus: Isoleucine--tRNA ligase (922 aa).

Positions 57–67 match the 'HIGH' region motif; sequence PYANGDIHLGH. Glu553 is a binding site for L-isoleucyl-5'-AMP. The 'KMSKS' region motif lies at 594 to 598; that stretch reads KMSKS. Lys597 is a binding site for ATP. Positions 892, 895, 912, and 915 each coordinate Zn(2+).

The protein belongs to the class-I aminoacyl-tRNA synthetase family. IleS type 1 subfamily. As to quaternary structure, monomer. Zn(2+) is required as a cofactor.

The protein resides in the cytoplasm. It carries out the reaction tRNA(Ile) + L-isoleucine + ATP = L-isoleucyl-tRNA(Ile) + AMP + diphosphate. Catalyzes the attachment of isoleucine to tRNA(Ile). As IleRS can inadvertently accommodate and process structurally similar amino acids such as valine, to avoid such errors it has two additional distinct tRNA(Ile)-dependent editing activities. One activity is designated as 'pretransfer' editing and involves the hydrolysis of activated Val-AMP. The other activity is designated 'posttransfer' editing and involves deacylation of mischarged Val-tRNA(Ile). The chain is Isoleucine--tRNA ligase from Desulfitobacterium hafniense (strain DSM 10664 / DCB-2).